Consider the following 350-residue polypeptide: Legumin K (350 aa).

2 disordered regions span residues 37 to 86 (LGGN…GNSV) and 102 to 170 (EEDT…RKNG). Composition is skewed to basic and acidic residues over residues 104–118 (DTAKRLRSPRDERSQ), 141–150 (EQSHSHSHRE), and 160–170 (EKQRSEERKNG). Positions 182-329 (ENIADAAGAD…AFGLRQRQVT (148 aa)) constitute a Cupin type-1 domain.

Belongs to the 11S seed storage protein (globulins) family. As to quaternary structure, hexamer; each subunit is composed of an acidic and a basic chain derived from a single precursor and linked by a disulfide bond.

In terms of biological role, this protein found in the seeds of many leguminous and non-leguminous plants is the source of sulfur-containing amino acids in seed meals. In Pisum sativum (Garden pea), this protein is Legumin K (LEGK).